Here is a 347-residue protein sequence, read N- to C-terminus: UDP-N-acetylenolpyruvoylglucosamine reductase (347 aa).

The FAD-binding PCMH-type domain maps to 17 to 187 (IEQLAAQLVV…TAVGLKFAKA (171 aa)). The active site involves R163. Residue S232 is the Proton donor of the active site. E327 is a catalytic residue.

It belongs to the MurB family. The cofactor is FAD.

The protein resides in the cytoplasm. The catalysed reaction is UDP-N-acetyl-alpha-D-muramate + NADP(+) = UDP-N-acetyl-3-O-(1-carboxyvinyl)-alpha-D-glucosamine + NADPH + H(+). It participates in cell wall biogenesis; peptidoglycan biosynthesis. Its function is as follows. Cell wall formation. This is UDP-N-acetylenolpyruvoylglucosamine reductase from Vibrio cholerae serotype O1 (strain ATCC 39315 / El Tor Inaba N16961).